The chain runs to 130 residues: Transcription antitermination protein NusB (130 aa).

It belongs to the NusB family.

Its function is as follows. Involved in transcription antitermination. Required for transcription of ribosomal RNA (rRNA) genes. Binds specifically to the boxA antiterminator sequence of the ribosomal RNA (rrn) operons. The sequence is that of Transcription antitermination protein NusB from Bacillus velezensis (strain DSM 23117 / BGSC 10A6 / LMG 26770 / FZB42) (Bacillus amyloliquefaciens subsp. plantarum).